The sequence spans 274 residues: MPELPEVETIKRTLTPCLREQKIARVEVYHPGVIAAPDPETFSRLLAGRIITGLDRRGKYLLVHLSGEYCLVVHLRMTGRLVFTEGAAPLAPHTHVVFSLAGGPSLRFVDTRRFGRLYLAAKAEVETLPGLRDLGPEPLDPAFDALALAAILAGRRRPIKQVLLDQRLVAGIGNIYADEMLFAAGIDPRRPAASLNHEEVARLRGAMQRVLEQGIANRGTSIRDYVDGSGRQGSNQEHLQVYGRTGRPCPRCGQPLERVRLGGRSTHFCPRCQV.

P2 serves as the catalytic Schiff-base intermediate with DNA. Residue E3 is the Proton donor of the active site. K59 (proton donor; for beta-elimination activity) is an active-site residue. Positions 93, 112, and 155 each coordinate DNA. The FPG-type zinc-finger motif lies at Q240–V274. R264 acts as the Proton donor; for delta-elimination activity in catalysis.

This sequence belongs to the FPG family. As to quaternary structure, monomer. The cofactor is Zn(2+).

The catalysed reaction is Hydrolysis of DNA containing ring-opened 7-methylguanine residues, releasing 2,6-diamino-4-hydroxy-5-(N-methyl)formamidopyrimidine.. It catalyses the reaction 2'-deoxyribonucleotide-(2'-deoxyribose 5'-phosphate)-2'-deoxyribonucleotide-DNA = a 3'-end 2'-deoxyribonucleotide-(2,3-dehydro-2,3-deoxyribose 5'-phosphate)-DNA + a 5'-end 5'-phospho-2'-deoxyribonucleoside-DNA + H(+). Its function is as follows. Involved in base excision repair of DNA damaged by oxidation or by mutagenic agents. Acts as a DNA glycosylase that recognizes and removes damaged bases. Has a preference for oxidized purines, such as 7,8-dihydro-8-oxoguanine (8-oxoG). Has AP (apurinic/apyrimidinic) lyase activity and introduces nicks in the DNA strand. Cleaves the DNA backbone by beta-delta elimination to generate a single-strand break at the site of the removed base with both 3'- and 5'-phosphates. The sequence is that of Formamidopyrimidine-DNA glycosylase from Moorella thermoacetica (strain ATCC 39073 / JCM 9320).